Here is a 388-residue protein sequence, read N- to C-terminus: Succinate--CoA ligase [ADP-forming] subunit beta (388 aa).

One can recognise an ATP-grasp domain in the interval 9–244 (KGVLSSFGVT…PDEYAAEELE (236 aa)). Residues lysine 46, 53-55 (GRG), glutamate 99, valine 102, and glutamate 107 each bind ATP. Residues asparagine 199 and aspartate 213 each contribute to the Mg(2+) site. Substrate contacts are provided by residues asparagine 264 and 320–322 (GIM).

Belongs to the succinate/malate CoA ligase beta subunit family. As to quaternary structure, heterotetramer of two alpha and two beta subunits. Mg(2+) is required as a cofactor.

The enzyme catalyses succinate + ATP + CoA = succinyl-CoA + ADP + phosphate. It catalyses the reaction GTP + succinate + CoA = succinyl-CoA + GDP + phosphate. It participates in carbohydrate metabolism; tricarboxylic acid cycle; succinate from succinyl-CoA (ligase route): step 1/1. Its function is as follows. Succinyl-CoA synthetase functions in the citric acid cycle (TCA), coupling the hydrolysis of succinyl-CoA to the synthesis of either ATP or GTP and thus represents the only step of substrate-level phosphorylation in the TCA. The beta subunit provides nucleotide specificity of the enzyme and binds the substrate succinate, while the binding sites for coenzyme A and phosphate are found in the alpha subunit. In Anaplasma marginale (strain St. Maries), this protein is Succinate--CoA ligase [ADP-forming] subunit beta.